We begin with the raw amino-acid sequence, 340 residues long: MVYNLGQLAQQLNAQLVGDAELNIYRLATFEKAAQGDITFVSDKNLLTRLDECNASAIVLPNSFKQGYQGNALFMETPYVGYALLARIFDTTPNPQPAIAASAQIHKNAIIGQNVTIAHNVVIEEGVVIGDNCQIMDNVVIGQYSTLGENTRIYPNATLYHQTELGKRCIIHANAVIGSDGFGNAPYQGTWIKIPQIGKVIIGDDVEIGASTTIDRGGLSDTLIANGVKIDNQCQIAHNVSIGAHTAIAGGSNVAGSTKIGSNCIVGGCVAINGHITIVDNVVVTGDSMVMRSITEPGIYSSGVPAQKNKAWRKTTAHTLKIDDLFKRVKALEKQLKDNT.

Histidine 238 serves as the catalytic Proton acceptor.

The protein belongs to the transferase hexapeptide repeat family. LpxD subfamily. In terms of assembly, homotrimer.

It catalyses the reaction a UDP-3-O-[(3R)-3-hydroxyacyl]-alpha-D-glucosamine + a (3R)-hydroxyacyl-[ACP] = a UDP-2-N,3-O-bis[(3R)-3-hydroxyacyl]-alpha-D-glucosamine + holo-[ACP] + H(+). The protein operates within bacterial outer membrane biogenesis; LPS lipid A biosynthesis. Functionally, catalyzes the N-acylation of UDP-3-O-acylglucosamine using 3-hydroxyacyl-ACP as the acyl donor. Is involved in the biosynthesis of lipid A, a phosphorylated glycolipid that anchors the lipopolysaccharide to the outer membrane of the cell. The sequence is that of UDP-3-O-acylglucosamine N-acyltransferase from Psychromonas ingrahamii (strain DSM 17664 / CCUG 51855 / 37).